The following is a 944-amino-acid chain: UvrABC system protein A (944 aa).

One can recognise an ABC transporter 1 domain in the interval 1-242 (MSKVDFLHIK…GKGIVKVENV (242 aa)). Position 34–41 (34–41 (GLSGSGKS)) interacts with ATP. The C4-type; degenerate zinc finger occupies 256–283 (CPKGDFEMPKIETRLFSFNSPYGMCQNC). 2 ABC transporter domains span residues 359–597 (EEID…KYLS) and 610–935 (SGSG…EKSY). 643–650 (GVSGSGKS) is a binding site for ATP. The segment at 744 to 770 (CEKCSGDGSIKIEMFFLPNVYITCDHC) adopts a C4-type zinc-finger fold.

Belongs to the ABC transporter superfamily. UvrA family. In terms of assembly, forms a heterotetramer with UvrB during the search for lesions.

The protein localises to the cytoplasm. In terms of biological role, the UvrABC repair system catalyzes the recognition and processing of DNA lesions. UvrA is an ATPase and a DNA-binding protein. A damage recognition complex composed of 2 UvrA and 2 UvrB subunits scans DNA for abnormalities. When the presence of a lesion has been verified by UvrB, the UvrA molecules dissociate. This is UvrABC system protein A from Mycoplasmopsis pulmonis (strain UAB CTIP) (Mycoplasma pulmonis).